Here is a 95-residue protein sequence, read N- to C-terminus: Protein TusB (95 aa).

It belongs to the DsrH/TusB family. Heterohexamer, formed by a dimer of trimers. The hexameric TusBCD complex contains 2 copies each of TusB, TusC and TusD. The TusBCD complex interacts with TusE.

The protein localises to the cytoplasm. Part of a sulfur-relay system required for 2-thiolation of 5-methylaminomethyl-2-thiouridine (mnm(5)s(2)U) at tRNA wobble positions. The polypeptide is Protein TusB (Sodalis glossinidius (strain morsitans)).